Here is a 220-residue protein sequence, read N- to C-terminus: Adenylate kinase (220 aa).

An ATP-binding site is contributed by 10 to 15 (GAGKGT). The NMP stretch occupies residues 30-59 (STGDMLRAAVKAGSPLGVEAKGYMDAGKLV). AMP is bound by residues Thr31, Arg36, 57-59 (KLV), 85-88 (GFPR), and Gln92. The interval 122–159 (GRRTHAASGRTYHVKFNPPKVEGQDDVTGEPLIQRDDD) is LID. Residues Arg123 and 132 to 133 (TY) each bind ATP. Positions 156 and 167 each coordinate AMP. Gly206 is a binding site for ATP.

It belongs to the adenylate kinase family. In terms of assembly, monomer.

It localises to the cytoplasm. It catalyses the reaction AMP + ATP = 2 ADP. The protein operates within purine metabolism; AMP biosynthesis via salvage pathway; AMP from ADP: step 1/1. Functionally, catalyzes the reversible transfer of the terminal phosphate group between ATP and AMP. Plays an important role in cellular energy homeostasis and in adenine nucleotide metabolism. In Burkholderia vietnamiensis (strain G4 / LMG 22486) (Burkholderia cepacia (strain R1808)), this protein is Adenylate kinase.